The sequence spans 60 residues: Histidine-rich metal-binding polypeptide (60 aa).

The segment at Met-1–Glu-60 is disordered. Positions Gly-10–Ser-35 are enriched in basic residues. Residues His-36–Glu-60 are compositionally biased toward basic and acidic residues. 2 repeat units span residues Glu-38 to Cys-42 and Glu-51 to Cys-55. The interval Glu-38–Cys-55 is 2 X 5 AA repeats of E-E-G-C-C.

In terms of biological role, strongly binds nickel and zinc. Binds other metals less strongly: cobalt &gt; copper &gt; cadmium &gt; manganese. May act to increase, or at least to preserve, urease activity. Exact function is still unknown. The chain is Histidine-rich metal-binding polypeptide (hpn) from Helicobacter pylori (strain J99 / ATCC 700824) (Campylobacter pylori J99).